Reading from the N-terminus, the 64-residue chain is Small ribosomal subunit protein bS21 (64 aa).

This sequence belongs to the bacterial ribosomal protein bS21 family.

This chain is Small ribosomal subunit protein bS21, found in Neorickettsia sennetsu (strain ATCC VR-367 / Miyayama) (Ehrlichia sennetsu).